A 243-amino-acid polypeptide reads, in one-letter code: Zwei Ig domain protein zig-6 (243 aa).

An N-terminal signal peptide occupies residues 1 to 20 (MTKLCLLLLPLVFLVSYSFA). Ig-like C2-type domains are found at residues 30–118 (PNAN…MDVI) and 133–212 (GQVL…KTVT). Cys-47 and Cys-102 are joined by a disulfide. 2 N-linked (GlcNAc...) asparagine glycosylation sites follow: Asn-91 and Asn-142. Residues Cys-145 and Cys-196 are joined by a disulfide bond.

In terms of tissue distribution, expressed in head and tail body wall muscles.

The protein resides in the secreted. Probably not involved in maintaining the position of ASI and ASH head neuron cell bodies and ventral nerve cord axons of PVQ, PVP, RMEV, AVK and HSN neurons. The polypeptide is Zwei Ig domain protein zig-6 (Caenorhabditis elegans).